We begin with the raw amino-acid sequence, 464 residues long: Argininosuccinate lyase (464 aa).

It belongs to the lyase 1 family. Argininosuccinate lyase subfamily.

The protein resides in the cytoplasm. The enzyme catalyses 2-(N(omega)-L-arginino)succinate = fumarate + L-arginine. Its pathway is amino-acid biosynthesis; L-arginine biosynthesis; L-arginine from L-ornithine and carbamoyl phosphate: step 3/3. In Crocosphaera subtropica (strain ATCC 51142 / BH68) (Cyanothece sp. (strain ATCC 51142)), this protein is Argininosuccinate lyase.